Here is a 308-residue protein sequence, read N- to C-terminus: Ribosomal RNA small subunit methyltransferase H (308 aa).

S-adenosyl-L-methionine-binding positions include 36-38 (GGH), D55, F82, D103, and Q110.

Belongs to the methyltransferase superfamily. RsmH family.

It localises to the cytoplasm. The catalysed reaction is cytidine(1402) in 16S rRNA + S-adenosyl-L-methionine = N(4)-methylcytidine(1402) in 16S rRNA + S-adenosyl-L-homocysteine + H(+). Functionally, specifically methylates the N4 position of cytidine in position 1402 (C1402) of 16S rRNA. This Helicobacter pylori (strain ATCC 700392 / 26695) (Campylobacter pylori) protein is Ribosomal RNA small subunit methyltransferase H.